Consider the following 157-residue polypeptide: Ribosome maturation factor RimP (157 aa).

Belongs to the RimP family.

The protein resides in the cytoplasm. Functionally, required for maturation of 30S ribosomal subunits. This chain is Ribosome maturation factor RimP, found in Levilactobacillus brevis (strain ATCC 367 / BCRC 12310 / CIP 105137 / JCM 1170 / LMG 11437 / NCIMB 947 / NCTC 947) (Lactobacillus brevis).